A 96-amino-acid chain; its full sequence is Putative pterin-4-alpha-carbinolamine dehydratase (96 aa).

It belongs to the pterin-4-alpha-carbinolamine dehydratase family.

It carries out the reaction (4aS,6R)-4a-hydroxy-L-erythro-5,6,7,8-tetrahydrobiopterin = (6R)-L-erythro-6,7-dihydrobiopterin + H2O. This Prochlorococcus marinus (strain MIT 9312) protein is Putative pterin-4-alpha-carbinolamine dehydratase.